A 442-amino-acid polypeptide reads, in one-letter code: NADH-quinone oxidoreductase subunit D (442 aa).

This sequence belongs to the complex I 49 kDa subunit family. As to quaternary structure, NDH-1 is composed of 14 different subunits. Subunits NuoB, C, D, E, F, and G constitute the peripheral sector of the complex.

The protein localises to the cell membrane. The enzyme catalyses a quinone + NADH + 5 H(+)(in) = a quinol + NAD(+) + 4 H(+)(out). NDH-1 shuttles electrons from NADH, via FMN and iron-sulfur (Fe-S) centers, to quinones in the respiratory chain. The immediate electron acceptor for the enzyme in this species is believed to be a menaquinone. Couples the redox reaction to proton translocation (for every two electrons transferred, four hydrogen ions are translocated across the cytoplasmic membrane), and thus conserves the redox energy in a proton gradient. This chain is NADH-quinone oxidoreductase subunit D, found in Mycolicibacterium smegmatis (strain ATCC 700084 / mc(2)155) (Mycobacterium smegmatis).